Here is a 150-residue protein sequence, read N- to C-terminus: UPF0102 protein sll0189 (150 aa).

It belongs to the UPF0102 family.

In Synechocystis sp. (strain ATCC 27184 / PCC 6803 / Kazusa), this protein is UPF0102 protein sll0189.